A 220-amino-acid chain; its full sequence is Ribosomal RNA small subunit methyltransferase Nep1 (220 aa).

Residues G178, G183, and 196 to 201 each bind S-adenosyl-L-methionine; that span reads IYKEPL.

Belongs to the class IV-like SAM-binding methyltransferase superfamily. RNA methyltransferase NEP1 family. In terms of assembly, homodimer.

The enzyme catalyses a pseudouridine in rRNA + S-adenosyl-L-methionine = an N(1)-methylpseudouridine in rRNA + S-adenosyl-L-homocysteine + H(+). Functionally, methyltransferase involved in ribosomal biogenesis. Specifically catalyzes the N1-methylation of the pseudouridine corresponding to position 914 in M.jannaschii 16S rRNA. The chain is Ribosomal RNA small subunit methyltransferase Nep1 from Thermococcus sibiricus (strain DSM 12597 / MM 739).